The following is a 623-amino-acid chain: Regulatory solute carrier protein family 1 member 1 (623 aa).

Polar residues-rich tracts occupy residues 1 to 16 (MSSL…QAHP), 83 to 99 (CASS…PAIP), and 133 to 144 (EASLSVTTTRMQ). Disordered regions lie at residues 1–48 (MSSL…PDSI), 71–99 (RKEQ…PAIP), 116–189 (SAEG…APHD), and 433–493 (EELT…PHCT). Basic and acidic residues-rich tracts occupy residues 150 to 159 (IGEKGWHPEY), 170 to 180 (QHEEPRNEQHE), and 460 to 473 (LVDK…RESV). Residues 474–491 (NESSLVTLDSAKTSNQPH) show a composition bias toward polar residues. The UBA domain maps to 577–617 (IFPAADIDRILRAGFTLQEALGALHRVGGNADLALLVLLAK).

Interacts with YRDC. As to expression, renal outer cortex and outer medulla, small intestine and liver.

The protein resides in the cell membrane. Its subcellular location is the nucleus. It localises to the golgi apparatus. The protein localises to the trans-Golgi network. In terms of biological role, mediates transcriptional and post-transcriptional regulation of SLC5A1. Inhibits a dynamin and PKC-dependent exocytotic pathway of SLC5A1. Also involved in transcriptional regulation of SLC22A2. Exhibits glucose-dependent, short-term inhibition of SLC5A1 and SLC22A2 by inhibiting the release of vesicles from the trans-Golgi network. The polypeptide is Regulatory solute carrier protein family 1 member 1 (RSC1A1) (Sus scrofa (Pig)).